Reading from the N-terminus, the 434-residue chain is Glutamyl-tRNA reductase (434 aa).

Substrate-binding positions include 49–52, serine 114, 119–121, and glutamine 125; these read TCNR and EPQ. Catalysis depends on cysteine 50, which acts as the Nucleophile. 199–204 serves as a coordination point for NADP(+); sequence GAGETI.

It belongs to the glutamyl-tRNA reductase family. Homodimer.

The catalysed reaction is (S)-4-amino-5-oxopentanoate + tRNA(Glu) + NADP(+) = L-glutamyl-tRNA(Glu) + NADPH + H(+). It functions in the pathway porphyrin-containing compound metabolism; protoporphyrin-IX biosynthesis; 5-aminolevulinate from L-glutamyl-tRNA(Glu): step 1/2. Its function is as follows. Catalyzes the NADPH-dependent reduction of glutamyl-tRNA(Glu) to glutamate 1-semialdehyde (GSA). In Pasteurella multocida (strain Pm70), this protein is Glutamyl-tRNA reductase.